The chain runs to 653 residues: Macrolide export ATP-binding/permease protein MacB (653 aa).

Positions 6-244 (LALSHICREF…AAASLPADKP (239 aa)) constitute an ABC transporter domain. 42-49 (GSSGSGKS) lines the ATP pocket. 4 helical membrane passes run 277–297 (FLTM…VALG), 526–546 (LAFL…IGVM), 587–607 (LGGI…NLLL), and 617–637 (FSIG…GYFP).

Belongs to the ABC transporter superfamily. Macrolide exporter (TC 3.A.1.122) family. As to quaternary structure, homodimer.

It is found in the cell inner membrane. In terms of biological role, non-canonical ABC transporter that contains transmembrane domains (TMD), which form a pore in the inner membrane, and an ATP-binding domain (NBD), which is responsible for energy generation. Confers resistance against macrolides. The chain is Macrolide export ATP-binding/permease protein MacB from Bradyrhizobium diazoefficiens (strain JCM 10833 / BCRC 13528 / IAM 13628 / NBRC 14792 / USDA 110).